A 439-amino-acid polypeptide reads, in one-letter code: Transcriptional enhancer factor TEF-5 (439 aa).

Positions 1-12 are enriched in polar residues; sequence MASNSWTANSSP. The segment at 1-34 is disordered; that stretch reads MASNSWTANSSPGEAREDGSEGLDKGLDNDAEGV. At Ala-2 the chain carries N-acetylalanine. Positions 14-28 are enriched in basic and acidic residues; sequence EAREDGSEGLDKGLD. The TEA DNA-binding region spans 28–104; the sequence is DNDAEGVWSP…QVLARKKVRE (77 aa). Ser-148 bears the Phosphoserine mark. The interval 173 to 439 is transcriptional activation; sequence GPSQDIKPFA…QHHVYKLVKD (267 aa).

As to quaternary structure, interacts with YAP1 and WWTR1/TAZ. As to expression, expressed in embryos as well as in many adult tissues.

It is found in the nucleus. Its function is as follows. Transcription factor which plays a key role in the Hippo signaling pathway, a pathway involved in organ size control and tumor suppression by restricting proliferation and promoting apoptosis. The core of this pathway is composed of a kinase cascade wherein MST1/MST2, in complex with its regulatory protein SAV1, phosphorylates and activates LATS1/2 in complex with its regulatory protein MOB1, which in turn phosphorylates and inactivates YAP1 oncoprotein and WWTR1/TAZ. Acts by mediating gene expression of YAP1 and WWTR1/TAZ, thereby regulating cell proliferation, migration and epithelial mesenchymal transition (EMT) induction. This chain is Transcriptional enhancer factor TEF-5 (Tead3), found in Mus musculus (Mouse).